We begin with the raw amino-acid sequence, 390 residues long: Bifunctional enzyme IspD/IspF (390 aa).

A 2-C-methyl-D-erythritol 4-phosphate cytidylyltransferase region spans residues 1–229; it reads MAAGRGERAG…RQDHAVFPDI (229 aa). A 2-C-methyl-D-erythritol 2,4-cyclodiphosphate synthase region spans residues 230–390; that stretch reads RTGNGYDVHS…TVIYPGEVPE (161 aa). A divalent metal cation contacts are provided by aspartate 236 and histidine 238. Residues 236–238 and 262–263 contribute to the 4-CDP-2-C-methyl-D-erythritol 2-phosphate site; these read DVH and HS. Histidine 270 provides a ligand contact to a divalent metal cation. Residues 284 to 286, 360 to 363, phenylalanine 367, and arginine 370 each bind 4-CDP-2-C-methyl-D-erythritol 2-phosphate; these read DIG and TTNE.

It in the N-terminal section; belongs to the IspD/TarI cytidylyltransferase family. IspD subfamily. In the C-terminal section; belongs to the IspF family. A divalent metal cation is required as a cofactor.

The catalysed reaction is 2-C-methyl-D-erythritol 4-phosphate + CTP + H(+) = 4-CDP-2-C-methyl-D-erythritol + diphosphate. It catalyses the reaction 4-CDP-2-C-methyl-D-erythritol 2-phosphate = 2-C-methyl-D-erythritol 2,4-cyclic diphosphate + CMP. The protein operates within isoprenoid biosynthesis; isopentenyl diphosphate biosynthesis via DXP pathway; isopentenyl diphosphate from 1-deoxy-D-xylulose 5-phosphate: step 2/6. Its pathway is isoprenoid biosynthesis; isopentenyl diphosphate biosynthesis via DXP pathway; isopentenyl diphosphate from 1-deoxy-D-xylulose 5-phosphate: step 4/6. Functionally, bifunctional enzyme that catalyzes the formation of 4-diphosphocytidyl-2-C-methyl-D-erythritol from CTP and 2-C-methyl-D-erythritol 4-phosphate (MEP) (IspD), and catalyzes the conversion of 4-diphosphocytidyl-2-C-methyl-D-erythritol 2-phosphate (CDP-ME2P) to 2-C-methyl-D-erythritol 2,4-cyclodiphosphate (ME-CPP) with a corresponding release of cytidine 5-monophosphate (CMP) (IspF). The sequence is that of Bifunctional enzyme IspD/IspF from Brucella suis biovar 1 (strain 1330).